Consider the following 607-residue polypeptide: Condensin-2 complex subunit H2 (607 aa).

T19 carries the post-translational modification Phosphothreonine. 4 positions are modified to phosphoserine: S95, S231, S235, and S252. Disordered regions lie at residues 211–312 and 325–347; these read YPMS…WQSL and KGKP…KRKG. The span at 254–263 shows a compositional bias: acidic residues; sequence GEEDAEDGAE. A Phosphoserine modification is found at S494.

The protein belongs to the CND2 H2 (condensin-2 subunit 2) family. Component of the condensin-2 complex, which contains the SMC2 and SMC4 heterodimer, and three non SMC subunits, NCAPG2, NCAPH2 and NCAPD3 that probably regulate the complex.

Its subcellular location is the nucleus. Regulatory subunit of the condensin-2 complex, a complex that seems to provide chromosomes with an additional level of organization and rigidity and in establishing mitotic chromosome architecture. May promote the resolution of double-strand DNA catenanes (intertwines) between sister chromatids. Condensin-mediated compaction likely increases tension in catenated sister chromatids, providing directionality for type II topoisomerase-mediated strand exchanges toward chromatid decatenation. Required for decatenation of chromatin bridges at anaphase. Early in neurogenesis, may play an essential role to ensure accurate mitotic chromosome condensation in neuron stem cells, ultimately affecting neuron pool and cortex size. Seems to have lineage-specific role in T-cell development. This is Condensin-2 complex subunit H2 from Mus musculus (Mouse).